We begin with the raw amino-acid sequence, 400 residues long: CCA-adding enzyme (400 aa).

G32 and R35 together coordinate ATP. 2 residues coordinate CTP: G32 and R35. Mg(2+) contacts are provided by D45 and D47. 5 residues coordinate ATP: R116, D159, R162, R165, and R168. CTP is bound by residues R116, D159, R162, R165, and R168.

It belongs to the tRNA nucleotidyltransferase/poly(A) polymerase family. Bacterial CCA-adding enzyme type 3 subfamily. As to quaternary structure, homodimer. Mg(2+) is required as a cofactor.

It catalyses the reaction a tRNA precursor + 2 CTP + ATP = a tRNA with a 3' CCA end + 3 diphosphate. The enzyme catalyses a tRNA with a 3' CCA end + 2 CTP + ATP = a tRNA with a 3' CCACCA end + 3 diphosphate. In terms of biological role, catalyzes the addition and repair of the essential 3'-terminal CCA sequence in tRNAs without using a nucleic acid template. Adds these three nucleotides in the order of C, C, and A to the tRNA nucleotide-73, using CTP and ATP as substrates and producing inorganic pyrophosphate. tRNA 3'-terminal CCA addition is required both for tRNA processing and repair. Also involved in tRNA surveillance by mediating tandem CCA addition to generate a CCACCA at the 3' terminus of unstable tRNAs. While stable tRNAs receive only 3'-terminal CCA, unstable tRNAs are marked with CCACCA and rapidly degraded. This is CCA-adding enzyme from Limosilactobacillus fermentum (strain NBRC 3956 / LMG 18251) (Lactobacillus fermentum).